Here is a 345-residue protein sequence, read N- to C-terminus: N(4)-(Beta-N-acetylglucosaminyl)-L-asparaginase (345 aa).

The N-terminal stretch at 1–23 (MARKWNLPFLLLPLVLGIPLVRG) is a signal peptide. N-linked (GlcNAc...) asparagine glycosylation is present at asparagine 38. A disulfide bridge connects residues cysteine 64 and cysteine 69. The N-linked (GlcNAc...) asparagine glycan is linked to asparagine 149. Cysteines 163 and 179 form a disulfide. Threonine 205 functions as the Nucleophile in the catalytic mechanism. Residues 233–236 (RVGD) and 256–259 (TGDG) each bind substrate. An intrachain disulfide couples cysteine 285 to cysteine 305. Asparagine 307 carries N-linked (GlcNAc...) asparagine glycosylation. A disulfide bridge links cysteine 316 with cysteine 344.

Belongs to the Ntn-hydrolase family. Heterotetramer of two alpha and two beta chains arranged as a dimer of alpha/beta heterodimers. In terms of processing, N-glycosylated. Post-translationally, cleaved into an alpha and beta chain by autocatalysis; this activates the enzyme. The N-terminal residue of the beta subunit is responsible for the nucleophile hydrolase activity.

Its subcellular location is the lysosome. The enzyme catalyses N(4)-(beta-N-acetyl-D-glucosaminyl)-L-asparagine + H2O = N-acetyl-beta-D-glucosaminylamine + L-aspartate + H(+). In terms of biological role, cleaves the GlcNAc-Asn bond which joins oligosaccharides to the peptide of asparagine-linked glycoproteins. The polypeptide is N(4)-(Beta-N-acetylglucosaminyl)-L-asparaginase (Aga) (Rattus norvegicus (Rat)).